We begin with the raw amino-acid sequence, 387 residues long: Probable 1-alkyl-2-acetylglycerophosphocholine esterase (387 aa).

The first 17 residues, 1–17 (MLVQGTIICALVANAIA), serve as a signal peptide directing secretion. 2 N-linked (GlcNAc...) asparagine glycosylation sites follow: Asn-51 and Asn-141. Ser-227 (nucleophile) is an active-site residue. Asp-250 acts as the Charge relay system in catalysis. Residue Asn-283 is glycosylated (N-linked (GlcNAc...) asparagine). The active-site Charge relay system is the His-313.

The protein belongs to the AB hydrolase superfamily. Lipase family.

It is found in the secreted. The enzyme catalyses a 1-O-alkyl-2-acetyl-sn-glycero-3-phosphocholine + H2O = a 1-O-alkyl-sn-glycero-3-phosphocholine + acetate + H(+). The sequence is that of Probable 1-alkyl-2-acetylglycerophosphocholine esterase from Arthroderma benhamiae (strain ATCC MYA-4681 / CBS 112371) (Trichophyton mentagrophytes).